A 702-amino-acid chain; its full sequence is Neurochondrin (702 aa).

This sequence belongs to the neurochondrin family.

It is found in the cytoplasm. Its subcellular location is the cytosol. The protein resides in the cell projection. It localises to the dendrite. The protein localises to the postsynapse. Probably involved in signal transduction, in the nervous system. Required for the spatial learning process. May also be involved in neurite outgrowth. The polypeptide is Neurochondrin (NCDN) (Gallus gallus (Chicken)).